Consider the following 450-residue polypeptide: Glucose-6-phosphate isomerase (450 aa).

At T39 the chain carries Phosphothreonine. Residue E291 is the Proton donor of the active site. Active-site residues include H312 and K426.

The protein belongs to the GPI family.

It is found in the cytoplasm. It carries out the reaction alpha-D-glucose 6-phosphate = beta-D-fructose 6-phosphate. The protein operates within carbohydrate biosynthesis; gluconeogenesis. It functions in the pathway carbohydrate degradation; glycolysis; D-glyceraldehyde 3-phosphate and glycerone phosphate from D-glucose: step 2/4. In terms of biological role, catalyzes the reversible isomerization of glucose-6-phosphate to fructose-6-phosphate. The polypeptide is Glucose-6-phosphate isomerase (Bacillus mycoides (strain KBAB4) (Bacillus weihenstephanensis)).